The sequence spans 153 residues: MPNYYDELEIEDFAWDPVARVFHYPCPCGDRFEISKGQLRDGEEIAICPSCSLIVRVIYDYLDWEDYVTTDDEDDGGSVDTPLSNTSPDPAYPVVVGSAEVESQSKTASSAVSSQKEECTSLSDRLAGLQVESGKEDDPVQEHKREDSSDVLH.

In terms of domain architecture, DPH-type MB spans 4–60; the sequence is YYDELEIEDFAWDPVARVFHYPCPCGDRFEISKGQLRDGEEIAICPSCSLIVRVIYD. The Fe cation site is built by Cys26, Cys28, Cys48, and Cys51. Positions 69-153 are disordered; sequence TTDDEDDGGS…KREDSSDVLH (85 aa). The span at 104 to 114 shows a compositional bias: low complexity; it reads QSKTASSAVSS. The span at 133-153 shows a compositional bias: basic and acidic residues; sequence SGKEDDPVQEHKREDSSDVLH.

This sequence belongs to the DPH3 family. Component of the 2-(3-amino-3-carboxypropyl)histidine synthase complex composed of DPH1, DPH2, DPH3 and a NADH-dependent reductase, predominantly CBR1. Fe(2+) serves as cofactor.

The protein localises to the cytoplasm. It is found in the nucleus. The catalysed reaction is [3Fe-4S](1+)-[protein] + Fe(2+)-[Dph3] = [3Fe-4S](0)-[protein] + Fe(3+)-[Dph3]. It carries out the reaction 2 [3Fe-4S](0)-[protein] + 2 Fe(2+)-[Dph3] + NADH = 2 [4Fe-4S](1+)-[protein] + 2 [Dph3] + NAD(+) + H(+). The protein operates within protein modification; peptidyl-diphthamide biosynthesis. Required for the first step of diphthamide biosynthesis, a post-translational modification of histidine which occurs in elongation factor 2. DPH1 and DPH2 transfer a 3-amino-3-carboxypropyl (ACP) group from S-adenosyl-L-methionine (SAM) to a histidine residue, the reaction is assisted by a reduction system comprising KTI11/DPH3 and a NADH-dependent reductase, predominantly CBR1. Acts as an electron donor to reduce the Fe-S cluster in DPH1-DPH2 keeping the [4Fe-4S] clusters in the active and reduced state. Restores iron to DPH1-DPH2 iron-sulfur clusters which have degraded from [4Fe-4S] to [3Fe-4S] by donating an iron atom to reform [4Fe-4S] clusters, in a manner dependent on the presence of elongation factor 2 and SAM. Associates with the elongator complex and is required for tRNA Wobble base modifications mediated by the elongator complex. The elongator complex is required for multiple tRNA modifications, including mcm5U (5-methoxycarbonylmethyl uridine), mcm5s 2U (5-methoxycarbonylmethyl-2-thiouridine), and ncm5U (5-carbamoylmethyl uridine). This is Diphthamide biosynthesis protein 3 (DPH3) from Cryptococcus neoformans var. neoformans serotype D (strain B-3501A) (Filobasidiella neoformans).